We begin with the raw amino-acid sequence, 360 residues long: DNA replication and repair protein RecF (360 aa).

30–37 contributes to the ATP binding site; the sequence is GQNGSGKT.

Belongs to the RecF family.

The protein resides in the cytoplasm. The RecF protein is involved in DNA metabolism; it is required for DNA replication and normal SOS inducibility. RecF binds preferentially to single-stranded, linear DNA. It also seems to bind ATP. In Shewanella putrefaciens (strain CN-32 / ATCC BAA-453), this protein is DNA replication and repair protein RecF.